The following is an 83-amino-acid chain: Sulfur carrier protein TusA (83 aa).

The Cysteine persulfide intermediate role is filled by Cys-20.

The protein belongs to the sulfur carrier protein TusA family.

It is found in the cytoplasm. In terms of biological role, sulfur carrier protein which probably makes part of a sulfur-relay system. In Pseudoalteromonas atlantica (strain T6c / ATCC BAA-1087), this protein is Sulfur carrier protein TusA.